A 242-amino-acid polypeptide reads, in one-letter code: Orotidine 5'-phosphate decarboxylase (242 aa).

Substrate contacts are provided by residues Asp16, Lys37, 64 to 73 (DLKFHDIPNT), Thr128, Arg190, Gln199, Gly219, and Arg220. The active-site Proton donor is the Lys66.

The protein belongs to the OMP decarboxylase family. Type 1 subfamily. In terms of assembly, homodimer.

It catalyses the reaction orotidine 5'-phosphate + H(+) = UMP + CO2. Its pathway is pyrimidine metabolism; UMP biosynthesis via de novo pathway; UMP from orotate: step 2/2. Its function is as follows. Catalyzes the decarboxylation of orotidine 5'-monophosphate (OMP) to uridine 5'-monophosphate (UMP). This chain is Orotidine 5'-phosphate decarboxylase, found in Prochlorococcus marinus (strain MIT 9312).